We begin with the raw amino-acid sequence, 292 residues long: 2-methylisocitrate lyase (292 aa).

44 to 46 (SGA) is a substrate binding site. Residues aspartate 84 and aspartate 86 each contribute to the Mg(2+) site. Substrate contacts are provided by residues 121-122 (CG), arginine 156, glutamate 186, 208-210 (NMT), arginine 239, and arginine 268.

Belongs to the isocitrate lyase/PEP mutase superfamily. Methylisocitrate lyase family. In terms of assembly, homotetramer; dimer of dimers. The cofactor is Mg(2+).

It catalyses the reaction (2S,3R)-3-hydroxybutane-1,2,3-tricarboxylate = pyruvate + succinate. It functions in the pathway organic acid metabolism; propanoate degradation. Its function is as follows. Involved in the catabolism of short chain fatty acids (SCFA) via the 2-methylcitrate cycle I (propionate degradation route). Catalyzes the thermodynamically favored C-C bond cleavage of (2R,3S)-2-methylisocitrate to yield pyruvate and succinate via an alpha-carboxy-carbanion intermediate. In Shewanella oneidensis (strain ATCC 700550 / JCM 31522 / CIP 106686 / LMG 19005 / NCIMB 14063 / MR-1), this protein is 2-methylisocitrate lyase.